The chain runs to 140 residues: Large ribosomal subunit protein bL17 (140 aa).

It belongs to the bacterial ribosomal protein bL17 family. As to quaternary structure, part of the 50S ribosomal subunit. Contacts protein L32.

The sequence is that of Large ribosomal subunit protein bL17 from Rhizobium etli (strain ATCC 51251 / DSM 11541 / JCM 21823 / NBRC 15573 / CFN 42).